The sequence spans 229 residues: MIIGVIGAMEQEVMLLSKQLAKLNIWQQARCNIYSGWLHGKKVVLVQSGIGKVSAALGCTLLLTNFEATLVINIGSAGGLSPALAVGDIIVSEEVQYHDVNVTAFGYDKGQMAQYPLLFPASPSLVALTKQLTEHTNINVVCGQIISGDIFINGGQELYKLKRRFPQAIAVDMEVTAIAQICYLFAVPFVGIRVITDIADSVSHKSFKDNLITVVSHLSLLVSDIIQAL.

The active-site Proton acceptor is the Glu-12. Residues Gly-78, Ile-152, and 173–174 each bind substrate; that span reads ME. Asp-197 (proton donor) is an active-site residue.

This sequence belongs to the PNP/UDP phosphorylase family. MtnN subfamily.

The enzyme catalyses S-adenosyl-L-homocysteine + H2O = S-(5-deoxy-D-ribos-5-yl)-L-homocysteine + adenine. It carries out the reaction S-methyl-5'-thioadenosine + H2O = 5-(methylsulfanyl)-D-ribose + adenine. It catalyses the reaction 5'-deoxyadenosine + H2O = 5-deoxy-D-ribose + adenine. It participates in amino-acid biosynthesis; L-methionine biosynthesis via salvage pathway; S-methyl-5-thio-alpha-D-ribose 1-phosphate from S-methyl-5'-thioadenosine (hydrolase route): step 1/2. In terms of biological role, catalyzes the irreversible cleavage of the glycosidic bond in both 5'-methylthioadenosine (MTA) and S-adenosylhomocysteine (SAH/AdoHcy) to adenine and the corresponding thioribose, 5'-methylthioribose and S-ribosylhomocysteine, respectively. Also cleaves 5'-deoxyadenosine, a toxic by-product of radical S-adenosylmethionine (SAM) enzymes, into 5-deoxyribose and adenine. This chain is 5'-methylthioadenosine/S-adenosylhomocysteine nucleosidase, found in Baumannia cicadellinicola subsp. Homalodisca coagulata.